A 692-amino-acid chain; its full sequence is 5-taurinomethyluridine-[tRNA] synthase subunit MTO1, mitochondrial (692 aa).

A mitochondrion-targeting transit peptide spans 1–25 (MFYLRGCGRWVAASFTKQQFPLVRL). FAD is bound by residues 43 to 48 (GGGHAG), Val155, Ser218, and Gln407. At Lys508 the chain carries N6-methyllysine. Positions 669–692 (AAMNESPKTDQCLRNADRLQERQL) are disordered. A compositionally biased stretch (basic and acidic residues) spans 683 to 692 (NADRLQERQL).

This sequence belongs to the MnmG family. In terms of assembly, homodimer; forms a dimer in the presence of potassium. Interacts with GTPBP3; forms the GTPBP3-MTO1 complex composed of homodimers of GTPBP3 and MTO1. It depends on FAD as a cofactor.

The protein localises to the mitochondrion. The enzyme catalyses 5,10-methylenetetrahydrofolate + uridine(34) in tRNA + taurine + GTP + A + H2O = 5-taurinomethyluridine(34) in tRNA + 7,8-dihydrofolate + GDP + AH2 + phosphate + H(+). Component of the GTPBP3-MTO1 complex that catalyzes the 5-taurinomethyluridine (taum(5)U) modification at the 34th wobble position (U34) of mitochondrial tRNAs (mt-tRNAs), which plays a role in mt-tRNA decoding and mitochondrial translation. Taum(5)U formation on mammalian mt-tRNA requires the presence of both GTPBP3-mediated GTPase activity and MTO1 catalytic activity. The polypeptide is 5-taurinomethyluridine-[tRNA] synthase subunit MTO1, mitochondrial (MTO1) (Macaca fascicularis (Crab-eating macaque)).